The chain runs to 627 residues: tRNA uridine 5-carboxymethylaminomethyl modification enzyme MnmG (627 aa).

FAD contacts are provided by residues Gly16–Gly21, Val128, and Ser183. Gly275–Phe289 provides a ligand contact to NAD(+). Gln372 contacts FAD.

It belongs to the MnmG family. Homodimer. Heterotetramer of two MnmE and two MnmG subunits. FAD serves as cofactor.

The protein resides in the cytoplasm. In terms of biological role, NAD-binding protein involved in the addition of a carboxymethylaminomethyl (cmnm) group at the wobble position (U34) of certain tRNAs, forming tRNA-cmnm(5)s(2)U34. This is tRNA uridine 5-carboxymethylaminomethyl modification enzyme MnmG from Geobacter sulfurreducens (strain ATCC 51573 / DSM 12127 / PCA).